A 388-amino-acid chain; its full sequence is Lipid-A-disaccharide synthase (388 aa).

Belongs to the LpxB family.

The enzyme catalyses a lipid X + a UDP-2-N,3-O-bis[(3R)-3-hydroxyacyl]-alpha-D-glucosamine = a lipid A disaccharide + UDP + H(+). The protein operates within bacterial outer membrane biogenesis; LPS lipid A biosynthesis. Its function is as follows. Condensation of UDP-2,3-diacylglucosamine and 2,3-diacylglucosamine-1-phosphate to form lipid A disaccharide, a precursor of lipid A, a phosphorylated glycolipid that anchors the lipopolysaccharide to the outer membrane of the cell. This chain is Lipid-A-disaccharide synthase, found in Burkholderia thailandensis (strain ATCC 700388 / DSM 13276 / CCUG 48851 / CIP 106301 / E264).